The primary structure comprises 855 residues: Leucine--tRNA ligase (855 aa).

Residues 42–52 (PYPSGSLHVGH) carry the 'HIGH' region motif. The disordered stretch occupies residues 292 to 311 (SEMDRTAEDKPKKGIPTGGK). Residues 293 to 303 (EMDRTAEDKPK) show a composition bias toward basic and acidic residues. Positions 614-618 (KMSKS) match the 'KMSKS' region motif. Lysine 617 serves as a coordination point for ATP.

The protein belongs to the class-I aminoacyl-tRNA synthetase family.

The protein resides in the cytoplasm. The catalysed reaction is tRNA(Leu) + L-leucine + ATP = L-leucyl-tRNA(Leu) + AMP + diphosphate. This chain is Leucine--tRNA ligase, found in Acaryochloris marina (strain MBIC 11017).